The chain runs to 2166 residues: Protein TIC236, chloroplastic (2166 aa).

Residues 1–37 (MSLRLQNPFLSTPLLHGSFNRREKRINVARRAFRSKR) constitute a chloroplast transit peptide. At 38–101 (IYSEKKQNDW…RSLAPVWEEG (64 aa)) the chain is on the stromal side. The chain crosses the membrane as a helical span at residues 102–122 (LFFLRCSVFFAVISGVCLLVW). The Chloroplast intermembrane segment spans residues 123–2166 (YGQNKARVFV…LFEYSATSQD (2044 aa)). Positions 1611–1649 (MSEGEVSETDRGGAVKIPSWAKEKEDDEKRTSRDRSEER) are disordered. Residues 1631–1649 (AKEKEDDEKRTSRDRSEER) show a composition bias toward basic and acidic residues.

The protein belongs to the TamB family. Part of the TIC complex, which can interact with components of the TOC complex to form a larger import complex. Interacts with the TOC complex component TOC75-3.

It localises to the plastid. The protein resides in the chloroplast inner membrane. It is found in the chloroplast intermembrane space. Part of the inner chloroplast membrane translocon complex (TIC) which associates with the outer chloroplast membrane translocon complex (TOC) and forms a supercomplex involved in protein precursor import into the chloroplast stroma. Required for the import of HSP93, TIC40 and RBCS protein precursors in the chloroplast stroma. Links the outer and inner membrane translocons of the chloroplast envelope. The polypeptide is Protein TIC236, chloroplastic (Arabidopsis thaliana (Mouse-ear cress)).